Reading from the N-terminus, the 339-residue chain is N-acetyl-gamma-glutamyl-phosphate reductase (339 aa).

The active site involves Cys145.

Belongs to the NAGSA dehydrogenase family. Type 1 subfamily.

It localises to the cytoplasm. The catalysed reaction is N-acetyl-L-glutamate 5-semialdehyde + phosphate + NADP(+) = N-acetyl-L-glutamyl 5-phosphate + NADPH + H(+). The protein operates within amino-acid biosynthesis; L-arginine biosynthesis; N(2)-acetyl-L-ornithine from L-glutamate: step 3/4. Functionally, catalyzes the NADPH-dependent reduction of N-acetyl-5-glutamyl phosphate to yield N-acetyl-L-glutamate 5-semialdehyde. The protein is N-acetyl-gamma-glutamyl-phosphate reductase of Thermotoga petrophila (strain ATCC BAA-488 / DSM 13995 / JCM 10881 / RKU-1).